A 138-amino-acid chain; its full sequence is Small ribosomal subunit protein uS11c (138 aa).

The tract at residues 1-21 is disordered; sequence MTKAIQKIGSRRNGRIASRKN. Positions 9–21 are enriched in basic residues; the sequence is GSRRNGRIASRKN.

Belongs to the universal ribosomal protein uS11 family. In terms of assembly, part of the 30S ribosomal subunit.

It localises to the plastid. The protein localises to the chloroplast. This is Small ribosomal subunit protein uS11c from Ceratophyllum demersum (Rigid hornwort).